Consider the following 1391-residue polypeptide: Eukaryotic translation initiation factor 3 subunit A (1391 aa).

One can recognise a PCI domain in the interval 315–498 (MQRMSTRVLL…RTLSFGSDLN (184 aa)). Composition is skewed to basic and acidic residues over residues 809 to 921 (DKEE…RGGP), 940 to 959 (AALR…EKVS), 966 to 1234 (EKGG…RDQT), 1246 to 1257 (GWREREKAREDS), 1265 to 1307 (QAPE…ETPR), and 1313 to 1380 (DSDR…IKPE). Positions 809–1391 (DKEEEEERLR…DEDGWTTVRR (583 aa)) are disordered. Tandem repeats lie at residues 973–982 (DEDRGPKRGL) and 983–992 (EEDRGPRRGI). Positions 973 to 1229 (DEDRGPKRGL…DDDRGPRRGE (257 aa)) are 26 X 10 AA approximate tandem repeats of [DE]-[DE]-[DE]-R-[GATV]-[PS]-[KRW]-R-G-[AEFGIL]. A 3; approximate repeat occupies 993–1001 (DDAGPRRGF). 20 tandem repeats follow at residues 1002–1011 (EEDRGPRRGI), 1012–1021 (EDDRAPRRGF), 1022–1031 (DDDRGPRRGF), 1032–1041 (DDDRGPRRGF), 1042–1051 (DEDRGPRRGI), 1052–1061 (DDDRGPRRGF), 1062–1071 (DEDRTPRRGF), 1072–1081 (DDDRGPRRGF), 1082–1091 (DDDRGPRRGF), 1092–1101 (DEDRGPRRGF), 1102–1111 (EDDRGPRRGF), 1112–1120 (EDDRGPRRG), 1122–1131 (EDDRGPRRGF), 1132–1141 (EDDRGPRRGF), 1142–1151 (EDDRGPRRGF), 1152–1161 (DEDRGPRRGF), 1162–1171 (EDDRGPRRGF), 1172–1181 (DEDRTPRRGF), 1182–1191 (DDDRGPRRGL), and 1192–1201 (DEDRGSWRGG). A 24; approximate repeat occupies 1202–1209 (DDVPRRGA). Tandem repeats lie at residues 1210 to 1219 (DDDRGPRRGA) and 1220 to 1229 (DDDRGPRRGE).

This sequence belongs to the eIF-3 subunit A family. Component of the eukaryotic translation initiation factor 3 (eIF-3) complex, which is composed of 13 subunits: eif3a, eif3b, eif3c, eif3d, eif3e, eif3f, eif3g, eif3h, eif3i, eif3j, eif3k, eif3l and eif3m.

The protein localises to the cytoplasm. RNA-binding component of the eukaryotic translation initiation factor 3 (eIF-3) complex, which is involved in protein synthesis of a specialized repertoire of mRNAs and, together with other initiation factors, stimulates binding of mRNA and methionyl-tRNAi to the 40S ribosome. The eIF-3 complex specifically targets and initiates translation of a subset of mRNAs involved in cell proliferation. The protein is Eukaryotic translation initiation factor 3 subunit A (eif3a) of Xenopus tropicalis (Western clawed frog).